Reading from the N-terminus, the 2513-residue chain is Polyprotein P1234 (2513 aa).

The 232-residue stretch at Glu-28–His-259 folds into the Alphavirus-like MT domain. Positions Gly-244 to Val-263 are nsP1 membrane-binding. 2 S-palmitoyl cysteine; by host lipidation sites follow: Cys-417 and Cys-419. Positions Asp-690–Lys-842 constitute a (+)RNA virus helicase ATP-binding domain. Gly-721 to Ser-728 contacts a ribonucleoside 5'-triphosphate. One can recognise a (+)RNA virus helicase C-terminal domain in the interval Ser-843 to Ser-991. A Peptidase C9 domain is found at Asp-1004–Leu-1327. A nucleolus localization signal region spans residues Thr-1005–Thr-1024. Cys-1013 (for cysteine protease nsP2 activity) is an active-site residue. Residues Thr-1058 to Ser-1067 carry the Nuclear export signal motif. His-1083 functions as the For cysteine protease nsP2 activity in the catalytic mechanism. The Nuclear localization signal signature appears at Pro-1182–Val-1186. ADP-D-ribose-binding residues include Asp-1343, Asn-1357, Gly-1365, Gly-1445, Val-1446, and Tyr-1447. Zn(2+)-binding residues include Cys-1595, Cys-1597, Cys-1620, and Cys-1638. 2 short sequence motifs (FGDF; binding to host G3BP1) span residues Phe-1851–Phe-1854 and Phe-1869–Phe-1872. The RdRp catalytic domain occupies Asp-2267–Ala-2382.

In terms of assembly, interacts with non-structural protein 3. Interacts with RNA-directed RNA polymerase nsP4. Interacts with protease nsP2. interacts with itself. Interacts with mRNA-capping enzyme nsP1. Interacts with host DDX1. Interacts with host DDX3. Interacts (via C-terminus) with host G3BP1; this interaction inhibits the formation of host stress granules on viral mRNAs and the nsp3-G3BP1 complexes bind viral RNAs and probably orchestrate the assembly of viral replication complexes. Interacts (via C-terminus) with host G3BP2; this interaction inhibits the formation of host stress granules on viral mRNAs and the nsp3-G3BP2 complexes bind viral RNAs and probably orchestrate the assembly of viral replication complexes. As to quaternary structure, interacts with mRNA-capping enzyme nsP1. Interacts with protease nsP2. interacts with itself. In terms of assembly, interacts with RNA-directed RNA polymerase nsP4. Interacts with mRNA-capping enzyme nsP1. Interacts with KPNA1/karyopherin-alpha1; this interaction probably allows the active transport of protease nsP2 into the host nucleus. It depends on Mg(2+) as a cofactor. Mn(2+) is required as a cofactor. In terms of processing, specific enzymatic cleavages in vivo yield mature proteins. The processing of the polyprotein is temporally regulated. In early stages (1.7 hpi), P1234 is first cleaved in trans through its nsP2 protease activity, releasing P123' and nsP4, which associate to form the early replication complex. At the same time, P1234 is also cut at the nsP1/nsP2 site early in infection but with lower efficiency. After replication of the viral minus-strand RNAs (4 hpi), the polyproteins are cut at the nsP1/nsP2 and nsP2/nsP3 sites very efficiently, preventing accumulation of P123' and P1234 and allowing the formation of the late replication complex. NsP3'/nsP4 site is not cleaved anymore and P34 is produced rather than nsP4. Specific enzymatic cleavages in vivo yield mature proteins. The processing of the polyprotein is temporally regulated. In early stages (1.7 hpi), P123 is cleaved at the nsP1/nsP2 site with low efficiency. After replication of the viral minus-strand RNAs (4 hpi), the polyproteins are cut at the nsP1/nsP2 and nsP2/nsP3 sites very efficiently, preventing accumulation of P123 and allowing the formation of the late replication complex. Post-translationally, specific enzymatic cleavages in vivo yield mature proteins. The processing of the polyprotein is temporally regulated. In early stages (1.7 hpi), P123 is cleaved at the nsP1/nsP2 site with low efficiency. After replication of the viral minus-strand RNAs (4 hpi), the polyproteins are cut at the nsP1/nsP2 and nsP2/nsP3 sites very efficiently, preventing accumulation of P123' and allowing the formation of the late replication complex. In terms of processing, palmitoylated by host palmitoyltransferases ZDHHC2 and ZDHHC19. Phosphorylated by host on serines and threonines. Post-translationally, ubiquitinated; targets the protein for rapid degradation via the ubiquitin system. Nsp4 is present in extremely low quantities due to low frequency of translation through the amber stop-codon and the degradation by the ubiquitin pathway.

The protein localises to the host cytoplasmic vesicle membrane. The protein resides in the host cell membrane. It is found in the host cell projection. Its subcellular location is the host filopodium. It localises to the host nucleus. The protein localises to the host cytoplasm. It carries out the reaction GTP + S-adenosyl-L-methionine = N(7)-methyl-GTP + S-adenosyl-L-homocysteine. The catalysed reaction is N(7)-methyl-GTP + L-histidyl-[protein] = N(tele)-(N(7)-methylguanosine 5'-phospho)-L-histidyl-[protein] + diphosphate. The enzyme catalyses N(tele)-(N(7)-methylguanosine 5'-phospho)-L-histidyl-[protein] + a 5'-end diphospho-(purine-ribonucleoside) in mRNA + H(+) = a 5'-end (N(7)-methyl 5'-triphosphoguanosine)-(purine-ribonucleoside) in mRNA + L-histidyl-[protein]. It catalyses the reaction a 5'-end triphospho-ribonucleoside in mRNA + H2O = a 5'-end diphospho-ribonucleoside in mRNA + phosphate + H(+). It carries out the reaction a ribonucleoside 5'-triphosphate + H2O = a ribonucleoside 5'-diphosphate + phosphate + H(+). The catalysed reaction is ATP + H2O = ADP + phosphate + H(+). The enzyme catalyses RNA(n) + a ribonucleoside 5'-triphosphate = RNA(n+1) + diphosphate. It catalyses the reaction 4-O-(ADP-D-ribosyl)-L-aspartyl-[protein] + H2O = L-aspartyl-[protein] + ADP-D-ribose + H(+). It carries out the reaction 5-O-(ADP-D-ribosyl)-L-glutamyl-[protein] + H2O = L-glutamyl-[protein] + ADP-D-ribose + H(+). The catalysed reaction is RNA(n) + ATP = RNA(n)-3'-adenine ribonucleotide + diphosphate. The enzyme catalyses ADP-alpha-D-ribose 1''-phosphate + H2O = ADP-D-ribose + phosphate. Its function is as follows. Inactive precursor of the viral replicase, which is activated by cleavages carried out by the viral protease nsP2. Functionally, the early replication complex formed by the polyprotein P123' and nsP4 synthesizes minus-strand RNAs. Polyprotein P123' is a short-lived polyprotein that accumulates during early stage of infection. As soon P123' is cleaved into mature proteins, the plus-strand RNAs synthesis begins. In terms of biological role, the early replication complex formed by the polyprotein P123 and nsP4 synthesizes minus-strand RNAs. As soon P123 is cleaved into mature proteins, the plus-strand RNAs synthesis begins. Cytoplasmic capping enzyme that catalyzes two virus-specific reactions: methyltransferase and nsP1 guanylyltransferase. mRNA-capping is necessary since all viral RNAs are synthesized in the cytoplasm, and host capping enzymes are restricted to the nucleus. The enzymatic reaction involves a covalent link between 7-methyl-GMP and nsP1, whereas eukaryotic capping enzymes form a covalent complex only with GMP. nsP1 capping consists in the following reactions: GTP is first methylated into 7-methyl-GMP and then is covalently linked to nsP1 to form the m7GMp-nsP1 complex from which 7-methyl-GMP complex is transferred to the mRNA to create the cap structure. NsP1 is also needed for the initiation of the minus-strand RNAs synthesis. Probably serves as a membrane anchor for the replication complex composed of nsP1-nsP4. Palmitoylated nsP1 is remodeling host cell cytoskeleton, and induces filopodium-like structure formation at the surface of the host cell. Its function is as follows. Multifunctional protein whose N-terminus is part of the RNA polymerase complex and displays NTPase, RNA triphosphatase and helicase activities. NTPase and RNA triphosphatase are involved in viral RNA capping and helicase keeps a check on the dsRNA replication intermediates. The C-terminus harbors a protease that specifically cleaves the polyproteins and releases the mature proteins. Required for the shutoff of minus-strand RNAs synthesis. Specifically inhibits the host IFN response by promoting the nuclear export of host STAT1. Also inhibits host transcription by inducing the rapid proteasome-dependent degradation of POLR2A, a catalytic subunit of the RNAPII complex. The resulting inhibition of cellular protein synthesis serves to ensure maximal viral gene expression and to evade host immune response. Functionally, seems to be essential for minus-strand RNAs and subgenomic 26S mRNAs synthesis. Displays mono-ADP-ribosylhydrolase activity. ADP-ribosylation is a post-translational modification that controls various processes of the host cell and the virus probably needs to revert it for optimal viral replication. Binds proteins of FXR family and sequesters them into the viral RNA replication complexes thereby inhibiting the formation of host stress granules on viral mRNAs. The nsp3'-FXR complexes bind viral RNAs and probably orchestrate the assembly of viral replication complexes, thanks to the ability of FXR family members to self-assemble and bind DNA. In terms of biological role, seems to be essential for minus-strand RNAs and subgenomic 26S mRNAs synthesis. Displays mono-ADP-ribosylhydrolase activity. ADP-ribosylation is a post-translational modification that controls various processes of the host cell and the virus probably needs to revert it for optimal viral replication. Binds proteins of G3BP family and sequesters them into the viral RNA replication complexes thereby inhibiting the formation of host stress granules on viral mRNAs. The nsp3-G3BP complexes bind viral RNAs and probably orchestrate the assembly of viral replication complexes, thanks to the ability of G3BP family members to self-assemble and bind DNA. RNA dependent RNA polymerase. Replicates genomic and antigenomic RNA by recognizing replications specific signals. The early replication complex formed by the polyprotein P123 and nsP4 synthesizes minus-strand RNAs. The late replication complex composed of fully processed nsP1-nsP4 is responsible for the production of genomic and subgenomic plus-strand RNAs. The chain is Polyprotein P1234 from Anopheles (Human).